Reading from the N-terminus, the 499-residue chain is Cysteine--tRNA ligase (499 aa).

A Zn(2+)-binding site is contributed by C30. The short motif at 32–42 (PTVYDRAHLGN) is the 'HIGH' region element. C221, H246, and E250 together coordinate Zn(2+). Positions 279-283 (KMSKS) match the 'KMSKS' region motif. Residue K282 coordinates ATP.

It belongs to the class-I aminoacyl-tRNA synthetase family. Monomer. Zn(2+) is required as a cofactor.

It is found in the cytoplasm. It carries out the reaction tRNA(Cys) + L-cysteine + ATP = L-cysteinyl-tRNA(Cys) + AMP + diphosphate. The sequence is that of Cysteine--tRNA ligase from Cereibacter sphaeroides (strain ATCC 17023 / DSM 158 / JCM 6121 / CCUG 31486 / LMG 2827 / NBRC 12203 / NCIMB 8253 / ATH 2.4.1.) (Rhodobacter sphaeroides).